We begin with the raw amino-acid sequence, 457 residues long: MDTNNNIEKEILALVKQNPKVSLIEYENYFSQLKYNPNASKSDIAFFYAPNQVLCTTITAKYGALLKEILSQNKVGMHLAHSVDVRIEVAPKIQINAQSNINYKAIKTSVKDSYTFENFVVGSCNNTVYEIAKKVAQSDTPPYNPVLFYGGTGLGKTHILNAIGNHALEKHKKVVLVTSEDFLTDFLKHLDNKTMDSFKAKYRHCDFFLLDDAQFLQGKPKLEEEFFHTFNELHANSKQIVLISDRSPKNIAGLEDRLKSRFEWGITAKVMPPDLETKLSIVKQKCQLNQITLPEEVMEYIAQHISDNIRQMEGAIIKISVNANLMNASIDLNLAKTVLEDLQKDHAEGSSLENILLAVAQSLNLKSSEIKVSSRQKNVALARKLVVYFARLYTPNPTLSLAQFLDLKDHSSISKMYSGVKKMLEEEKSPFVLSLREEIKNRLNELNDKKTAFNSSE.

The tract at residues 1–90 is domain I, interacts with DnaA modulators; that stretch reads MDTNNNIEKE…HSVDVRIEVA (90 aa). Positions 91-112 are domain II; the sequence is PKIQINAQSNINYKAIKTSVKD. The interval 113-323 is domain III, AAA+ region; that stretch reads SYTFENFVVG…GAIIKISVNA (211 aa). G153, G155, K156, and T157 together coordinate ATP. A domain IV, binds dsDNA region spans residues 324-457; that stretch reads NLMNASIDLN…DKKTAFNSSE (134 aa).

This sequence belongs to the DnaA family. In terms of assembly, oligomerizes as a right-handed, spiral filament on DNA at oriC. Interacts via domain I with HobA. In a crystal with domains I and II of DnaA HobA forms tetramers with DnaA fragments bound at the dimer interface of the tetramer.

Its subcellular location is the cytoplasm. The protein localises to the cell inner membrane. In terms of biological role, plays an essential role in the initiation and regulation of chromosomal replication. ATP-DnaA binds to the origin of replication (oriC) to initiate formation of the DNA replication initiation complex once per cell cycle. Binds the DnaA box (a 9 base pair repeat at the origin) and separates the double-stranded (ds)DNA. Forms a right-handed helical filament on oriC DNA; dsDNA binds to the exterior of the filament while single-stranded (ss)DNA is stabiized in the filament's interior. The ATP-DnaA-oriC complex binds and stabilizes one strand of the AT-rich DNA unwinding element (DUE), permitting loading of DNA polymerase. After initiation quickly degrades to an ADP-DnaA complex that is not apt for DNA replication. Binds acidic phospholipids. Functionally, the DnaA box is 5'-TTATC[CA]A[CA]A-3' in this bacterium cycle. Multiple discrete DnaA-oriC complexes can be seen as DnaA levels increase. Binding of DnaA to oriC is increased by HobA; some chi-type structures can be seen by electron microscopy. Strand separation requires the DnaA boxes and adjacent DnaA-trio motifs but works equally well with ADP or ATP. The chain is Chromosomal replication initiator protein DnaA from Helicobacter pylori (strain ATCC 700392 / 26695) (Campylobacter pylori).